Consider the following 375-residue polypeptide: Outer membrane porin OmpD (375 aa).

Residues 1–34 (MRKHAKKIIRIIKMKLKLVAVAVTSLLAAGVVNA) form the signal peptide.

The protein belongs to the Gram-negative porin family. In terms of assembly, homotrimer. Mixed heterotrimers with other porins are also probable.

The protein localises to the cell outer membrane. In terms of biological role, forms pores that allow passive diffusion of small molecules across the outer membrane. The chain is Outer membrane porin OmpD from Salmonella typhimurium (strain SL1344).